Here is a 766-residue protein sequence, read N- to C-terminus: Serine/threonine-protein kinase DCLK2 (766 aa).

The segment at 1 to 45 (MASTRSIELEHFEERDKRPRPGSRRGAPSSSGGSSSSGPKGNGLI) is disordered. The span at 7 to 19 (IELEHFEERDKRP) shows a compositional bias: basic and acidic residues. Residues 24 to 39 (RRGAPSSSGGSSSSGP) show a composition bias toward low complexity. Residue T61 is modified to Phosphothreonine. Doublecortin domains lie at 72–158 (KKAR…VDYT) and 197–280 (KLVT…AQDD). 2 stretches are compositionally biased toward low complexity: residues 300 to 312 (AVKY…PGPS) and 324 to 347 (TPSS…SPGS). Positions 300 to 378 (AVKYSGSKSP…ELDRCISPEG (79 aa)) are disordered. S362 is modified (phosphoserine). The Protein kinase domain occupies 394–651 (YKIGKVIGDG…AGQILSHPWV (258 aa)). Residues 400-408 (IGDGNFAVV) and K423 contribute to the ATP site. Catalysis depends on D515, which acts as the Proton acceptor. A Phosphoserine modification is found at S647. T666 is modified (phosphothreonine). Positions 707-766 (CQDSGRPGMEPISPVPPSVEEIPVPGEAVPAPTPPESPTPHPPPAAPGGERAGTWRRHRD) are disordered. Residues 724–736 (SVEEIPVPGEAVP) are compositionally biased toward low complexity. Residues 737 to 752 (APTPPESPTPHPPPAA) show a composition bias toward pro residues.

Belongs to the protein kinase superfamily. CAMK Ser/Thr protein kinase family. CaMK subfamily. In terms of assembly, binds to and stabilizes microtubules. Interacts with MAPK8IP1/JIP-1, MAPK8IP2/JIP-2, MAPK9/JNK2, PPP1R9B/NEURABIN-2 and actin. Post-translationally, autophosphorylated. In terms of tissue distribution, expressed in the brain, heart and eyes.

Its subcellular location is the cytoplasm. It localises to the cytoskeleton. The enzyme catalyses L-seryl-[protein] + ATP = O-phospho-L-seryl-[protein] + ADP + H(+). It catalyses the reaction L-threonyl-[protein] + ATP = O-phospho-L-threonyl-[protein] + ADP + H(+). In terms of biological role, protein kinase with a significantly reduced C(a2+)/CAM affinity and dependence compared to other members of the CaMK family. May play a role in the down-regulation of CRE-dependent gene activation probably by phosphorylation of the CREB coactivator CRTC2/TORC2 and the resulting retention of TORC2 in the cytoplasm. The chain is Serine/threonine-protein kinase DCLK2 (DCLK2) from Homo sapiens (Human).